The primary structure comprises 362 residues: Peptide chain release factor 1 (362 aa).

Position 237 is an N5-methylglutamine (glutamine 237). The segment covering 285–295 has biased composition (basic and acidic residues); it reads EEKRHAEEAST. The disordered stretch occupies residues 285-311; it reads EEKRHAEEASTRRNLLGSGDRSDRIRT.

This sequence belongs to the prokaryotic/mitochondrial release factor family. Post-translationally, methylated by PrmC. Methylation increases the termination efficiency of RF1.

Its subcellular location is the cytoplasm. In terms of biological role, peptide chain release factor 1 directs the termination of translation in response to the peptide chain termination codons UAG and UAA. This is Peptide chain release factor 1 from Photobacterium profundum (strain SS9).